The sequence spans 231 residues: Uracil-DNA glycosylase (231 aa).

Asp-74 serves as the catalytic Proton acceptor.

It belongs to the uracil-DNA glycosylase (UDG) superfamily. UNG family.

The protein localises to the cytoplasm. It catalyses the reaction Hydrolyzes single-stranded DNA or mismatched double-stranded DNA and polynucleotides, releasing free uracil.. Excises uracil residues from the DNA which can arise as a result of misincorporation of dUMP residues by DNA polymerase or due to deamination of cytosine. This is Uracil-DNA glycosylase from Campylobacter jejuni (strain RM1221).